Reading from the N-terminus, the 218-residue chain is Peptide methionine sulfoxide reductase MsrA (218 aa).

Cysteine 57 is a catalytic residue.

Belongs to the MsrA Met sulfoxide reductase family.

The enzyme catalyses L-methionyl-[protein] + [thioredoxin]-disulfide + H2O = L-methionyl-(S)-S-oxide-[protein] + [thioredoxin]-dithiol. It carries out the reaction [thioredoxin]-disulfide + L-methionine + H2O = L-methionine (S)-S-oxide + [thioredoxin]-dithiol. In terms of biological role, has an important function as a repair enzyme for proteins that have been inactivated by oxidation. Catalyzes the reversible oxidation-reduction of methionine sulfoxide in proteins to methionine. The sequence is that of Peptide methionine sulfoxide reductase MsrA from Brucella anthropi (Ochrobactrum anthropi).